The chain runs to 119 residues: NAD(P)H-quinone oxidoreductase subunit M (119 aa).

It belongs to the complex I NdhM subunit family. In terms of assembly, NDH-1 can be composed of about 15 different subunits; different subcomplexes with different compositions have been identified which probably have different functions.

The protein localises to the cell inner membrane. It carries out the reaction a plastoquinone + NADH + (n+1) H(+)(in) = a plastoquinol + NAD(+) + n H(+)(out). The enzyme catalyses a plastoquinone + NADPH + (n+1) H(+)(in) = a plastoquinol + NADP(+) + n H(+)(out). Functionally, NDH-1 shuttles electrons from an unknown electron donor, via FMN and iron-sulfur (Fe-S) centers, to quinones in the respiratory and/or the photosynthetic chain. The immediate electron acceptor for the enzyme in this species is believed to be plastoquinone. Couples the redox reaction to proton translocation, and thus conserves the redox energy in a proton gradient. Cyanobacterial NDH-1 also plays a role in inorganic carbon-concentration. The polypeptide is NAD(P)H-quinone oxidoreductase subunit M (Gloeobacter violaceus (strain ATCC 29082 / PCC 7421)).